Here is a 417-residue protein sequence, read N- to C-terminus: Phosphoglycerate kinase, cytosolic (417 aa).

(2R)-3-phosphoglycerate contacts are provided by Val23, Asp24, Phe25, Asn26, Arg39, Ser61, His62, Gly64, Arg65, Arg132, His168, and Arg169. Residues Gly214 and Ala215 each coordinate ADP. Residue Gly214 coordinates CDP. 2 residues coordinate AMP: Ala215 and Lys216. Position 215 (Ala215) interacts with ATP. Residue Ala215 coordinates Mg(2+). Lys216 is a (2R)-3-phosphoglycerate binding site. Residue Asp219 coordinates CDP. Asp219 is a binding site for Mg(2+). The ADP site is built by Lys220 and Gly238. Position 220 (Lys220) interacts with AMP. Residue Lys220 participates in ATP binding. Gly238 provides a ligand contact to CDP. 2 residues coordinate AMP: Ala239 and Ala311. The ATP site is built by Ala239 and Ala311. Positions 311 and 335 each coordinate ADP. CDP-binding residues include Gly336 and Phe341. Phe341, Glu342, Asp374, and Ser375 together coordinate ADP. Glu342 is an AMP binding site. ATP is bound by residues Glu342, Asp374, and Ser375. Asp374 lines the Mg(2+) pocket.

Belongs to the phosphoglycerate kinase family. As to quaternary structure, monomer. Mg(2+) serves as cofactor.

The protein localises to the cytoplasm. It catalyses the reaction (2R)-3-phosphoglycerate + ATP = (2R)-3-phospho-glyceroyl phosphate + ADP. It participates in carbohydrate degradation; glycolysis; pyruvate from D-glyceraldehyde 3-phosphate: step 2/5. The chain is Phosphoglycerate kinase, cytosolic (PGKB) from Leishmania major.